Here is an 86-residue protein sequence, read N- to C-terminus: Small ribosomal subunit protein bS20 (86 aa).

A disordered region spans residues 1 to 27 (MANSKQAKKRAGQSEKRRQHNASRRSM).

It belongs to the bacterial ribosomal protein bS20 family.

Its function is as follows. Binds directly to 16S ribosomal RNA. This is Small ribosomal subunit protein bS20 from Colwellia psychrerythraea (strain 34H / ATCC BAA-681) (Vibrio psychroerythus).